The chain runs to 109 residues: Hainantoxin-XVIII-4 (109 aa).

Residues Met1–Ala18 form the signal peptide. A propeptide spanning residues Phe19–Ala46 is cleaved from the precursor. Intrachain disulfides connect Cys55–Cys68, Cys59–Cys108, and Cys61–Cys81.

It belongs to the neurotoxin 25 family. F7 subfamily. Expressed by the venom gland.

The protein resides in the secreted. Its function is as follows. Putative ion channel inhibitor. The sequence is that of Hainantoxin-XVIII-4 from Cyriopagopus hainanus (Chinese bird spider).